The primary structure comprises 438 residues: Ubiquitin carboxyl-terminal hydrolase 27 (438 aa).

Positions 78–421 constitute a USP domain; that stretch reads RGLINLGNTC…EGYLLFYHKQ (344 aa). Catalysis depends on Cys-87, which acts as the Nucleophile. His-380 functions as the Proton acceptor in the catalytic mechanism.

The protein belongs to the peptidase C19 family. In terms of assembly, interacts with phosphorylated BCL2L11 isoform BIMEL; this interaction leads to BCL2L11 deubiquitination and stabilization.

Its subcellular location is the cytoplasm. The protein localises to the cytosol. The protein resides in the nucleus. It carries out the reaction Thiol-dependent hydrolysis of ester, thioester, amide, peptide and isopeptide bonds formed by the C-terminal Gly of ubiquitin (a 76-residue protein attached to proteins as an intracellular targeting signal).. In terms of biological role, deubiquitinase involved in innate antiviral immunity by mediating deubiquitination of CGAS and RIGI. Negatively regulates RIGI by mediating 'Lys-63'-linked deubiquitination of RIGI, inhibiting type I interferon signaling. Also regulates 'Lys-63'-linked ubiquitination level of MDA5/IFIH1. Acts as a positive regulator of the cGAS-STING pathway by catalyzing 'Lys-48'-linked deubiquitination of CGAS, thereby promoting its stabilization. Can reduce the levels of BCL2L11/BIM ubiquitination and stabilize BCL2L11 in response to the RAF-MAPK-degradation signal. By acting on BCL2L11 levels, may counteract the anti-apoptotic effects of MAPK activity. The sequence is that of Ubiquitin carboxyl-terminal hydrolase 27 from Homo sapiens (Human).